The primary structure comprises 245 residues: 1-(5-phosphoribosyl)-5-[(5-phosphoribosylamino)methylideneamino] imidazole-4-carboxamide isomerase (245 aa).

Aspartate 7 acts as the Proton acceptor in catalysis. Aspartate 129 functions as the Proton donor in the catalytic mechanism.

This sequence belongs to the HisA/HisF family.

The protein localises to the cytoplasm. It carries out the reaction 1-(5-phospho-beta-D-ribosyl)-5-[(5-phospho-beta-D-ribosylamino)methylideneamino]imidazole-4-carboxamide = 5-[(5-phospho-1-deoxy-D-ribulos-1-ylimino)methylamino]-1-(5-phospho-beta-D-ribosyl)imidazole-4-carboxamide. Its pathway is amino-acid biosynthesis; L-histidine biosynthesis; L-histidine from 5-phospho-alpha-D-ribose 1-diphosphate: step 4/9. The chain is 1-(5-phosphoribosyl)-5-[(5-phosphoribosylamino)methylideneamino] imidazole-4-carboxamide isomerase from Escherichia coli (strain 55989 / EAEC).